The sequence spans 606 residues: Kelch-like protein 41 (606 aa).

A Phosphoserine modification is found at serine 3. In terms of domain architecture, BTB spans 33–100; sequence IDCTLKAGDK…LYSASIDLND (68 aa). Residues 135-237 enclose the BACK domain; the sequence is CLAILRLGLL…AEKYFKDHVE (103 aa). Kelch repeat units lie at residues 346 to 398, 399 to 447, 448 to 495, 497 to 542, and 544 to 599; these read QVYV…EVDD, KIYV…SHNG, MIYC…IHKG, IVIA…SLAG, and LYAI…TRLN.

Interacts with NRAP. Part of a complex that contains CUL3, RBX1 and KLHL41. Interacts with LASP1. Ubiquitinated by E3 ubiquitin ligase complex formed by CUL3 and RBX1 and probably targeted for proteasome-independent degradation. Quinone-induced oxidative stress increases its ubiquitination. As to expression, skeletal muscle. Localized between laterally fusing myofibrils in skeletal muscle (at protein level). Expressed at a lower level in the heart compared to skeletal muscle.

The protein localises to the cytoplasm. It is found in the cytoskeleton. The protein resides in the cell projection. It localises to the pseudopodium. Its subcellular location is the ruffle. The protein localises to the myofibril. It is found in the sarcomere. The protein resides in the m line. It localises to the sarcoplasmic reticulum membrane. Its subcellular location is the endoplasmic reticulum membrane. Involved in skeletal muscle development and differentiation. Regulates proliferation and differentiation of myoblasts and plays a role in myofibril assembly by promoting lateral fusion of adjacent thin fibrils into mature, wide myofibrils. Required for pseudopod elongation in transformed cells. This is Kelch-like protein 41 (Klhl41) from Mus musculus (Mouse).